The following is a 524-amino-acid chain: Probable pectinesterase/pectinesterase inhibitor 42 (524 aa).

The signal sequence occupies residues 1–22 (MLVKVFSFFILMITMVVIGVSK). Residues 23–172 (EYCDDKHSCQ…ISKAKVALAL (150 aa)) form a pectinesterase inhibitor 42 region. The interval 215–510 (DVVVAKDGTG…FTVAKLLDGE (296 aa)) is pectinesterase 42. N-linked (GlcNAc...) asparagine glycosylation is found at Asn-265 and Asn-281. Thr-290 is a substrate binding site. The active-site Proton donor; for pectinesterase activity is the Asp-343. Cys-357 and Cys-377 are joined by a disulfide. Residue Asp-364 is the Nucleophile; for pectinesterase activity of the active site. An N-linked (GlcNAc...) asparagine glycan is attached at Asn-412. 2 residues coordinate substrate: Arg-430 and Trp-432.

It in the N-terminal section; belongs to the PMEI family. This sequence in the C-terminal section; belongs to the pectinesterase family. In terms of tissue distribution, expressed in siliques but not in flower buds.

It localises to the secreted. It is found in the cell wall. The catalysed reaction is [(1-&gt;4)-alpha-D-galacturonosyl methyl ester](n) + n H2O = [(1-&gt;4)-alpha-D-galacturonosyl](n) + n methanol + n H(+). Its pathway is glycan metabolism; pectin degradation; 2-dehydro-3-deoxy-D-gluconate from pectin: step 1/5. Acts in the modification of cell walls via demethylesterification of cell wall pectin. This Arabidopsis thaliana (Mouse-ear cress) protein is Probable pectinesterase/pectinesterase inhibitor 42 (PME42).